Here is a 124-residue protein sequence, read N- to C-terminus: Small ribosomal subunit protein uS12cz/uS12cy (124 aa).

Belongs to the universal ribosomal protein uS12 family. As to quaternary structure, part of the 30S ribosomal subunit.

Its subcellular location is the plastid. In terms of biological role, with S4 and S5 plays an important role in translational accuracy. Located at the interface of the 30S and 50S subunits. This Epifagus virginiana (Beechdrops) protein is Small ribosomal subunit protein uS12cz/uS12cy (rps12-A).